Consider the following 117-residue polypeptide: Large ribosomal subunit protein bL20 (117 aa).

Belongs to the bacterial ribosomal protein bL20 family.

Functionally, binds directly to 23S ribosomal RNA and is necessary for the in vitro assembly process of the 50S ribosomal subunit. It is not involved in the protein synthesizing functions of that subunit. This chain is Large ribosomal subunit protein bL20, found in Thermomicrobium roseum (strain ATCC 27502 / DSM 5159 / P-2).